The sequence spans 318 residues: SPX domain-containing protein 4 (318 aa).

The SPX domain maps to 1 to 187; the sequence is MKFGKEFRTH…GGLLRLPFTQ (187 aa). Low complexity predominate over residues 226–237; it reads SAVQAHSSSHQH. Disordered stretches follow at residues 226-247 and 284-318; these read SAVQ…AETS and SSLL…GPSH. Residues 305 to 318 are compositionally biased toward basic and acidic residues; the sequence is NKDDSEKEDTGPSH.

This is SPX domain-containing protein 4 (SPX4) from Arabidopsis thaliana (Mouse-ear cress).